We begin with the raw amino-acid sequence, 32 residues long: RPKCCCVCGVVGRKCCSTWDKCHPVHLPCPSS.

4-hydroxyproline is present on residues proline 2, proline 24, proline 28, and proline 30. Serine amide is present on serine 32.

Contains 4 disulfide bonds. Expressed by the venom duct.

It is found in the secreted. In Californiconus californicus (California cone), this protein is Conotoxin Cltx-4.